Reading from the N-terminus, the 213-residue chain is Ribosomal RNA small subunit methyltransferase G (213 aa).

Residues Gly-77, Met-82, 104–106, and Arg-145 contribute to the S-adenosyl-L-methionine site; that span reads EKS.

Belongs to the methyltransferase superfamily. RNA methyltransferase RsmG family.

It is found in the cytoplasm. The enzyme catalyses guanosine(527) in 16S rRNA + S-adenosyl-L-methionine = N(7)-methylguanosine(527) in 16S rRNA + S-adenosyl-L-homocysteine. Its function is as follows. Specifically methylates the N7 position of guanine in position 527 of 16S rRNA. The protein is Ribosomal RNA small subunit methyltransferase G of Pelagibacter ubique (strain HTCC1062).